Consider the following 231-residue polypeptide: Ureidoacrylate amidohydrolase RutB (231 aa).

Residue aspartate 25 is the Proton acceptor of the active site. Lysine 134 is a catalytic residue. Cysteine 167 serves as the catalytic Nucleophile.

This sequence belongs to the isochorismatase family. RutB subfamily.

It carries out the reaction (Z)-3-ureidoacrylate + H2O + H(+) = (Z)-3-aminoacrylate + NH4(+) + CO2. The enzyme catalyses (Z)-3-ureidoacrylate + H2O = (Z)-3-aminoacrylate + carbamate + H(+). The catalysed reaction is (Z)-2-methylureidoacrylate + H2O + H(+) = (Z)-2-methylaminoacrylate + NH4(+) + CO2. Hydrolyzes ureidoacrylate to form aminoacrylate and carbamate. The carbamate hydrolyzes spontaneously, thereby releasing one of the nitrogen atoms of the pyrimidine ring as ammonia and one of its carbon atoms as CO2. The polypeptide is Ureidoacrylate amidohydrolase RutB (Escherichia coli O9:H4 (strain HS)).